A 56-amino-acid polypeptide reads, in one-letter code: Small ribosomal subunit protein uS14 (56 aa).

4 residues coordinate Zn(2+): C21, C24, C39, and C42.

This sequence belongs to the universal ribosomal protein uS14 family. Zinc-binding uS14 subfamily. Part of the 30S ribosomal subunit. The cofactor is Zn(2+).

Binds 16S rRNA, required for the assembly of 30S particles. This chain is Small ribosomal subunit protein uS14, found in Pyrococcus abyssi (strain GE5 / Orsay).